A 418-amino-acid chain; its full sequence is Light-independent protochlorophyllide reductase subunit N (418 aa).

[4Fe-4S] cluster-binding residues include cysteine 17, cysteine 42, and cysteine 103.

The protein belongs to the BchN/ChlN family. As to quaternary structure, protochlorophyllide reductase is composed of three subunits; ChlL, ChlN and ChlB. Forms a heterotetramer of two ChlB and two ChlN subunits. It depends on [4Fe-4S] cluster as a cofactor.

It carries out the reaction chlorophyllide a + oxidized 2[4Fe-4S]-[ferredoxin] + 2 ADP + 2 phosphate = protochlorophyllide a + reduced 2[4Fe-4S]-[ferredoxin] + 2 ATP + 2 H2O. It participates in porphyrin-containing compound metabolism; chlorophyll biosynthesis (light-independent). Component of the dark-operative protochlorophyllide reductase (DPOR) that uses Mg-ATP and reduced ferredoxin to reduce ring D of protochlorophyllide (Pchlide) to form chlorophyllide a (Chlide). This reaction is light-independent. The NB-protein (ChlN-ChlB) is the catalytic component of the complex. The chain is Light-independent protochlorophyllide reductase subunit N from Prochlorococcus marinus (strain MIT 9515).